Reading from the N-terminus, the 437-residue chain is Aspartate aminotransferase, mitochondrial (437 aa).

Gly72, Trp167, and Asn220 together coordinate L-aspartate. The residue at position 284 (Lys284) is an N6-(pyridoxal phosphate)lysine. Arg413 is a binding site for L-aspartate.

Belongs to the class-I pyridoxal-phosphate-dependent aminotransferase family. Homodimer. Pyridoxal 5'-phosphate serves as cofactor.

The protein localises to the mitochondrion matrix. The catalysed reaction is L-aspartate + 2-oxoglutarate = oxaloacetate + L-glutamate. Its function is as follows. Plays a key role in amino acid metabolism. Important for metabolite exchange between mitochondria and cytosol. This chain is Aspartate aminotransferase, mitochondrial, found in Schizosaccharomyces pombe (strain 972 / ATCC 24843) (Fission yeast).